We begin with the raw amino-acid sequence, 194 residues long: Probable RNA 2'-phosphotransferase (194 aa).

The protein belongs to the KptA/TPT1 family.

Functionally, removes the 2'-phosphate from RNA via an intermediate in which the phosphate is ADP-ribosylated by NAD followed by a presumed transesterification to release the RNA and generate ADP-ribose 1''-2''-cyclic phosphate (APPR&gt;P). May function as an ADP-ribosylase. The polypeptide is Probable RNA 2'-phosphotransferase (Escherichia coli O45:K1 (strain S88 / ExPEC)).